The chain runs to 252 residues: Aspartate/glutamate leucyltransferase (252 aa).

It belongs to the R-transferase family. Bpt subfamily.

It is found in the cytoplasm. The enzyme catalyses N-terminal L-glutamyl-[protein] + L-leucyl-tRNA(Leu) = N-terminal L-leucyl-L-glutamyl-[protein] + tRNA(Leu) + H(+). The catalysed reaction is N-terminal L-aspartyl-[protein] + L-leucyl-tRNA(Leu) = N-terminal L-leucyl-L-aspartyl-[protein] + tRNA(Leu) + H(+). Functionally, functions in the N-end rule pathway of protein degradation where it conjugates Leu from its aminoacyl-tRNA to the N-termini of proteins containing an N-terminal aspartate or glutamate. This Xanthomonas campestris pv. campestris (strain B100) protein is Aspartate/glutamate leucyltransferase.